Reading from the N-terminus, the 583-residue chain is Pescadillo (583 aa).

Residues 275-329 (EKLSALSASLARMVASVEEEEAELDHFPTEGEDQEKMEVREKMEQQQSKQKKLFE) are a coiled coil. The BRCT domain maps to 323 to 416 (KQKKLFEGLK…IQLPVEEYFL (94 aa)). Disordered stretches follow at residues 448-526 (RGEK…EEKA) and 558-583 (ANKLAAKRKAHDDASKADKKKKKKKC). The span at 455–489 (EEDEEEEGEEEEDDEEDEEDDEQSEDEEEAEEEAN) shows a compositional bias: acidic residues. A compositionally biased stretch (basic and acidic residues) spans 512-526 (AKAENRARAAEEEKA).

This sequence belongs to the pescadillo family. Component of the PeBoW complex, composed of bop1, pes1 and wdr12. The complex is held together by bop1, which interacts with pes1 via its N-terminal domain and with wdr12 via a high-affinity interaction between the seven-bladed beta-propeller domains of the 2 proteins. The PeBoW complex associates with the 66S pre-ribosome.

It localises to the nucleus. It is found in the nucleolus. The protein resides in the nucleoplasm. Its function is as follows. Component of the PeBoW complex, which is required for maturation of 28S and 5.8S ribosomal RNAs and formation of the 60S ribosome. This Danio rerio (Zebrafish) protein is Pescadillo (pes).